A 268-amino-acid chain; its full sequence is Glutamate racemase (268 aa).

Residues 13 to 14 (DS) and 45 to 46 (YG) contribute to the substrate site. The active-site Proton donor/acceptor is Cys77. Substrate is bound at residue 78–79 (NT). The active-site Proton donor/acceptor is the Cys185. Residue 186 to 187 (TH) coordinates substrate.

The protein belongs to the aspartate/glutamate racemases family.

It catalyses the reaction L-glutamate = D-glutamate. It participates in cell wall biogenesis; peptidoglycan biosynthesis. Functionally, provides the (R)-glutamate required for cell wall biosynthesis. The sequence is that of Glutamate racemase from Vibrio campbellii (strain ATCC BAA-1116).